The sequence spans 258 residues: Chymotrypsin-like elastase family member 1 (258 aa).

The first 8 residues, 1–8 (MLVLYGHS), serve as a signal peptide directing secretion. Positions 9–18 (TQDVPETNAR) are cleaved as a propeptide — activation peptide. In terms of domain architecture, Peptidase S1 spans 19–256 (VVGGTEARRN…YITWINNVIA (238 aa)). C48 and C64 are disulfide-bonded. H63 (charge relay system) is an active-site residue. Residues E77, N79, Q82, and E87 each contribute to the Ca(2+) site. N-linked (GlcNAc...) asparagine glycosylation occurs at N79. D111 functions as the Charge relay system in the catalytic mechanism. Cystine bridges form between C145–C212, C176–C192, and C202–C232. S206 functions as the Charge relay system in the catalytic mechanism. The N-linked (GlcNAc...) asparagine glycan is linked to N233.

This sequence belongs to the peptidase S1 family. Elastase subfamily. Requires Ca(2+) as cofactor.

The protein resides in the secreted. It catalyses the reaction Hydrolysis of proteins, including elastin. Preferential cleavage: Ala-|-Xaa.. Its function is as follows. Serine proteases that hydrolyze many proteins in addition to elastin. The sequence is that of Chymotrypsin-like elastase family member 1 (CELA1) from Canis lupus familiaris (Dog).